The sequence spans 598 residues: uncharacterized protein (598 aa).

D397, D408, E506, and E520 together coordinate Mn(2+).

Belongs to the peptidase M24B family. Mn(2+) serves as cofactor.

This is an uncharacterized protein from Schizosaccharomyces pombe (strain 972 / ATCC 24843) (Fission yeast).